The chain runs to 416 residues: 4-hydroxy-3-methylbut-2-en-1-yl diphosphate synthase (flavodoxin) (416 aa).

4 residues coordinate [4Fe-4S] cluster: cysteine 304, cysteine 307, cysteine 350, and glutamate 357.

It belongs to the IspG family. [4Fe-4S] cluster is required as a cofactor.

The catalysed reaction is (2E)-4-hydroxy-3-methylbut-2-enyl diphosphate + oxidized [flavodoxin] + H2O + 2 H(+) = 2-C-methyl-D-erythritol 2,4-cyclic diphosphate + reduced [flavodoxin]. It functions in the pathway isoprenoid biosynthesis; isopentenyl diphosphate biosynthesis via DXP pathway; isopentenyl diphosphate from 1-deoxy-D-xylulose 5-phosphate: step 5/6. In terms of biological role, converts 2C-methyl-D-erythritol 2,4-cyclodiphosphate (ME-2,4cPP) into 1-hydroxy-2-methyl-2-(E)-butenyl 4-diphosphate. This is 4-hydroxy-3-methylbut-2-en-1-yl diphosphate synthase (flavodoxin) from Rhizobium leguminosarum bv. trifolii (strain WSM2304).